Here is a 48-residue protein sequence, read N- to C-terminus: Mating-type pheromone BAP1(2) (48 aa).

Cysteine methyl ester is present on cysteine 45. Cysteine 45 carries the S-farnesyl cysteine lipid modification. Residues 46–48 constitute a propeptide, removed in mature form; it reads VRG.

The protein localises to the cell membrane. In terms of biological role, activates B-regulated development. This is Mating-type pheromone BAP1(2) (BAP1(2)) from Schizophyllum commune (Split gill fungus).